Here is a 589-residue protein sequence, read N- to C-terminus: Probable translation initiation factor IF-2 (589 aa).

The 216-residue stretch at 14–229 folds into the tr-type G domain; the sequence is LRQPIVCVLG…LAGLAQRFLE (216 aa). Positions 23 to 30 are G1; the sequence is GHVDHGKT. 23–30 serves as a coordination point for GTP; the sequence is GHVDHGKT. The segment at 48-52 is G2; sequence GITQR. A G3 region spans residues 84–87; it reads DTPG. GTP is bound by residues 84–88 and 138–141; these read DTPGH and NKID. Residues 138–141 form a G4 region; sequence NKID. A G5 region spans residues 206-208; that stretch reads SAK.

The protein belongs to the TRAFAC class translation factor GTPase superfamily. Classic translation factor GTPase family. IF-2 subfamily.

Its function is as follows. Function in general translation initiation by promoting the binding of the formylmethionine-tRNA to ribosomes. Seems to function along with eIF-2. This Thermoplasma acidophilum (strain ATCC 25905 / DSM 1728 / JCM 9062 / NBRC 15155 / AMRC-C165) protein is Probable translation initiation factor IF-2 (infB).